Reading from the N-terminus, the 372-residue chain is Chaperone protein DnaJ (372 aa).

Residues 5–70 enclose the J domain; that stretch reads DYYEVLGVSK…QKRAAYDQYG (66 aa). A CR-type zinc finger spans residues 127–205; it reads GVTKEIRIPT…CHGHGRVERY (79 aa). The Zn(2+) site is built by cysteine 140, cysteine 143, cysteine 157, cysteine 160, cysteine 179, cysteine 182, cysteine 193, and cysteine 196. CXXCXGXG motif repeat units follow at residues 140-147, 157-164, 179-186, and 193-200; these read CDICHGSG, CSTCQGAG, CPHCHGRG, and CHKCHGHG.

The protein belongs to the DnaJ family. Homodimer. The cofactor is Zn(2+).

It localises to the cytoplasm. In terms of biological role, participates actively in the response to hyperosmotic and heat shock by preventing the aggregation of stress-denatured proteins and by disaggregating proteins, also in an autonomous, DnaK-independent fashion. Unfolded proteins bind initially to DnaJ; upon interaction with the DnaJ-bound protein, DnaK hydrolyzes its bound ATP, resulting in the formation of a stable complex. GrpE releases ADP from DnaK; ATP binding to DnaK triggers the release of the substrate protein, thus completing the reaction cycle. Several rounds of ATP-dependent interactions between DnaJ, DnaK and GrpE are required for fully efficient folding. Also involved, together with DnaK and GrpE, in the DNA replication of plasmids through activation of initiation proteins. This is Chaperone protein DnaJ from Photorhabdus laumondii subsp. laumondii (strain DSM 15139 / CIP 105565 / TT01) (Photorhabdus luminescens subsp. laumondii).